A 1840-amino-acid polypeptide reads, in one-letter code: Neurexin 1 (1840 aa).

The tract at residues 1–50 (MKAPHSATYQDNYADAAMTARTRPSMDMDQQRNRNQAELRLLPAQRTSTS) is disordered. Residues 1–1696 (MKAPHSATYQ…NSIEEERTAM (1696 aa)) are Extracellular-facing. Positions 24–37 (PSMDMDQQRNRNQA) are enriched in basic and acidic residues. Residues 104-289 (GFQLDGSQNS…RDIKCGDVPC (186 aa)) enclose the Laminin G-like 1 domain. Positions 309–347 (TTDACERNDPCQHGGICISTDSGPICECRNLEYDGQYCE) constitute an EGF-like 1 domain. Intrachain disulfides connect C313–C325, C319–C334, C336–C346, C511–C547, C710–C739, C746–C757, C751–C766, and C768–C778. Laminin G-like domains are found at residues 352 to 547 (PSEA…EYQC) and 554 to 739 (DPVT…KPSC). The EGF-like 2 domain occupies 742 to 779 (QANVCNGNPCLNGGTCLEGWNRPICDCSATLYGGPTCG). Laminin G-like domains follow at residues 784 to 964 (TLAF…LPSA) and 982 to 1158 (HAAT…VSGC). 4 disulfides stabilise this stretch: C1130/C1158, C1164/C1175, C1169/C1184, and C1186/C1196. The region spanning 1160-1197 (GPTKCSQNACANRGNCVQQWNAYACECDMTSYTGPTCY) is the EGF-like 3 domain. A Laminin G-like 6 domain is found at 1201–1416 (IAYEFGNNKG…LIFSGAGSGC (216 aa)). The disordered stretch occupies residues 1411–1651 (GAGSGCRGDD…DEHHPLPPLP (241 aa)). The span at 1447-1472 (QTTTSQQGNSLSTGGSSSGGVITNGT) shows a compositional bias: low complexity. A compositionally biased stretch (polar residues) spans 1491 to 1527 (TTEQFTSTSTARGSESNNEMVTITTTGRSDVTTEQHQ). Low complexity predominate over residues 1528-1600 (GSSSSSSSGS…TTTTTTTTQA (73 aa)). Basic and acidic residues predominate over residues 1632–1646 (RNDHDRMQLPDEHHP). The chain crosses the membrane as a helical span at residues 1697-1717 (IIGIVAGILIAVVLVILLVLW). Residues 1718 to 1840 (LKSNGDRGYK…DSKDVKEWYV (123 aa)) lie on the Cytoplasmic side of the membrane. A disordered region spans residues 1737 to 1840 (GSHNPNAALL…DSKDVKEWYV (104 aa)). Polar residues predominate over residues 1747-1757 (GNTSTNGSYHQ). Residues 1774-1787 (QQQHHAQQQMHNGH) show a composition bias toward low complexity. Positions 1788–1813 (NGNGNGGGGGGGGMMSSGSGSLGYGS) are enriched in gly residues. Residues D1831 and D1834 each coordinate Zn(2+). A compositionally biased stretch (basic and acidic residues) spans 1831–1840 (DSKDVKEWYV). Positions 1837–1840 (EWYV) match the PDZ domain binding motif.

This sequence belongs to the neurexin family. In terms of assembly, interacts (via C-terminal PDZ binding motif) with CASK (via PDZ domain). Interacts (via cytoplasmic domain) with apolpp/ApoLI; the interaction supports apolpp/ApoLI protein stability. Interact (via cytoplasmic domain) with Spn/Spinophilin. Interacts with RhoGAP100F/Syd-1 (via PDZ domain); RhoGAP100F/Syd-1 may recruit Nrx-1 to the presynaptic active zone. Expressed in brain, with expression in medulla, lamina, lobula, lobula plate, mushroom body and antennal lobe, and in retina (at protein level). Expressed in rabdomere of photoreceptor cells (at protein level).

The protein resides in the synaptic cell membrane. It localises to the presynaptic cell membrane. The protein localises to the postsynaptic cell membrane. Neuronal cell adhesion protein involved in synapse formation, development of synaptic active zones, synaptic regulation and visual function. Plays a role in cell adhesion between the pre- and the postsynaptic cell. Required for proper proliferation of synaptic boutons during larval development, a process necessary for coordinated matching of pre-and postsynaptic compartments. Promotes presynaptic active zone formation and neurotransmitter release. Spn/Spinophilin fine-tunes nrx-1/nlg1 signaling at the pre-synapse to control active zone number and functionality and thereby optimizing action potential-induced exocytosis. Required for synapse formation in central nervous system. By regulating synapse formation, may play a role in larval associative learning. Together with RhoGAP100F/syd-1, controls synapse formation at the neuromuscular junction. Essential for synaptic vesicle cycling, which plays critical roles in neurotransmission at neuromuscular junctions (NMJ). Regulated and restricts formation of glutamate receptor clusters. Mediates retinoid transport and subsequent rhodopsin maturation and may regulate lipoprotein function; thereby playing a role in vision. Regulates sleep, circadian rhythm and synaptic plasticity. Together with CASK, required for locomotion. This Drosophila melanogaster (Fruit fly) protein is Neurexin 1.